A 349-amino-acid polypeptide reads, in one-letter code: Anthranilate phosphoribosyltransferase (349 aa).

5-phospho-alpha-D-ribose 1-diphosphate contacts are provided by residues glycine 82, glycine 85–aspartate 86, asparagine 92–threonine 95, lysine 110–glycine 118, and serine 122. Residue glycine 82 coordinates anthranilate. Serine 94 provides a ligand contact to Mg(2+). Asparagine 113 contacts anthranilate. Anthranilate is bound at residue arginine 168. 2 residues coordinate Mg(2+): aspartate 227 and glutamate 228.

Belongs to the anthranilate phosphoribosyltransferase family. In terms of assembly, homodimer. Mg(2+) is required as a cofactor.

It catalyses the reaction N-(5-phospho-beta-D-ribosyl)anthranilate + diphosphate = 5-phospho-alpha-D-ribose 1-diphosphate + anthranilate. The protein operates within amino-acid biosynthesis; L-tryptophan biosynthesis; L-tryptophan from chorismate: step 2/5. In terms of biological role, catalyzes the transfer of the phosphoribosyl group of 5-phosphorylribose-1-pyrophosphate (PRPP) to anthranilate to yield N-(5'-phosphoribosyl)-anthranilate (PRA). In Pseudomonas fluorescens (strain Pf0-1), this protein is Anthranilate phosphoribosyltransferase.